We begin with the raw amino-acid sequence, 190 residues long: GTP cyclohydrolase 1 (190 aa).

Zn(2+) is bound by residues C79, H82, and C151.

The protein belongs to the GTP cyclohydrolase I family. Toroid-shaped homodecamer, composed of two pentamers of five dimers.

It carries out the reaction GTP + H2O = 7,8-dihydroneopterin 3'-triphosphate + formate + H(+). It functions in the pathway cofactor biosynthesis; 7,8-dihydroneopterin triphosphate biosynthesis; 7,8-dihydroneopterin triphosphate from GTP: step 1/1. The polypeptide is GTP cyclohydrolase 1 (Clostridioides difficile (strain 630) (Peptoclostridium difficile)).